The primary structure comprises 229 residues: ATP synthase subunit a (229 aa).

7 consecutive transmembrane segments (helical) span residues 25–45, 58–75, 81–101, 110–130, 141–161, 175–195, and 196–216; these read VHIIYTWVVMALLITLGVLGA, FLEVLISGIEEFMVSVTG, FFPLAGTIAIFIAVSNLIGLV, SINTPLACAIVVFVFTHFIGI, FLGPVWWLAPLIFPIEIIGHL, MMGHESVLVILFMLGGAFFAP, and LPIMALGIFVAFVQAFVFFLL.

It belongs to the ATPase A chain family. In terms of assembly, F-type ATPases have 2 components, CF(1) - the catalytic core - and CF(0) - the membrane proton channel. CF(1) has five subunits: alpha(3), beta(3), gamma(1), delta(1), epsilon(1). CF(0) has three main subunits: a(1), b(2) and c(9-12). The alpha and beta chains form an alternating ring which encloses part of the gamma chain. CF(1) is attached to CF(0) by a central stalk formed by the gamma and epsilon chains, while a peripheral stalk is formed by the delta and b chains.

The protein localises to the cell inner membrane. Key component of the proton channel; it plays a direct role in the translocation of protons across the membrane. In Desulfosudis oleivorans (strain DSM 6200 / JCM 39069 / Hxd3) (Desulfococcus oleovorans), this protein is ATP synthase subunit a.